The sequence spans 376 residues: Putative transcription factor egl-18 (376 aa).

4 disordered regions span residues 1–33, 65–122, 148–197, and 240–264; these read MSIS…CSGC, NNEL…LPDF, MVQQ…SDIP, and ATPS…PNAA. The segment covering 9–27 has biased composition (basic and acidic residues); that stretch reads TRPESAEQQHHEVLQRPSD. 2 stretches are compositionally biased toward low complexity: residues 68–89 and 165–175; these read LKSS…RSSP and QQSVSPPQSKS. The segment covering 176–195 has biased composition (basic and acidic residues); that stretch reads VKIEDPMDQDVKQEESERSD. Positions 241–250 are enriched in polar residues; the sequence is TPSSQSQDSS. The segment at 266–290 adopts a GATA-type zinc-finger fold; sequence CSNCRTDKTTAWRRDAEGKLVCNPC.

As to expression, expressed in differentiated seam cells. Expressed in the head and trunk.

It is found in the nucleus. Functionally, probable transcription factor. Involved in embryonic development and in vulval development in larvae, acting redundantly, at least in part, with elt-6. Perhaps acting together with elt-6, may form a positive feedback loop to initiate and maintain lin-39 gene expression to ensure proper vulval precursor cell (VPC) fate specification. Together with elt-6, acts as a downstream target of the Wnt/beta-catenin asymmetry pathway, required to adopt or maintain the seam cell fate. Required in seam cells, acting redundantly with elt-6, to promote production of alae, expression of several seam-specific genes and maintenance of seam cells in an unfused state. Plays a role in longevity. May form a transcriptional circuit with GATA factors elt-3 and elt-6. This Caenorhabditis elegans protein is Putative transcription factor egl-18.